Here is a 186-residue protein sequence, read N- to C-terminus: Translation initiation factor IF-3 (186 aa).

Belongs to the IF-3 family. In terms of assembly, monomer.

It is found in the cytoplasm. Functionally, IF-3 binds to the 30S ribosomal subunit and shifts the equilibrium between 70S ribosomes and their 50S and 30S subunits in favor of the free subunits, thus enhancing the availability of 30S subunits on which protein synthesis initiation begins. The chain is Translation initiation factor IF-3 from Borreliella burgdorferi (strain ATCC 35210 / DSM 4680 / CIP 102532 / B31) (Borrelia burgdorferi).